The following is an 896-amino-acid chain: Alanine--tRNA ligase (896 aa).

Zn(2+) is bound by residues H581, H585, C684, and H688.

This sequence belongs to the class-II aminoacyl-tRNA synthetase family. Zn(2+) serves as cofactor.

The protein resides in the cytoplasm. The enzyme catalyses tRNA(Ala) + L-alanine + ATP = L-alanyl-tRNA(Ala) + AMP + diphosphate. Its function is as follows. Catalyzes the attachment of alanine to tRNA(Ala) in a two-step reaction: alanine is first activated by ATP to form Ala-AMP and then transferred to the acceptor end of tRNA(Ala). Also edits incorrectly charged Ser-tRNA(Ala) and Gly-tRNA(Ala) via its editing domain. The chain is Alanine--tRNA ligase from Renibacterium salmoninarum (strain ATCC 33209 / DSM 20767 / JCM 11484 / NBRC 15589 / NCIMB 2235).